We begin with the raw amino-acid sequence, 458 residues long: 5-hydroxytryptamine receptor 2C (458 aa).

Residues 1-32 (MVNLRNAVHSFLVHLIGLLVWQSDISVSPVAA) form the signal peptide. Residues 33-55 (IVTDIFNTSDGGRFKFPDGVQNW) are Extracellular-facing. N39 carries an N-linked (GlcNAc...) asparagine glycan. A helical membrane pass occupies residues 56-80 (PALSIVIIIIMTIGGNILVIMAVSM). At 81–86 (EKKLHN) the chain is on the cytoplasmic side. The helical transmembrane segment at 87-111 (ATNYFLMSLAIADMLVGLLVMPLSL) threads the bilayer. Residues 112 to 128 (LAILYDYVWPLPRYLCP) lie on the Extracellular side of the membrane. The cysteines at positions 127 and 207 are disulfide-linked. Residues 129–151 (VWISLDVLFSTASIMHLCAISLD) traverse the membrane as a helical segment. Residue T139 participates in ergotamine binding. The DRY motif; important for ligand-induced conformation changes motif lies at 151–153 (DRY). Residues 152 to 167 (RYVAIRNPIEHSRFNS) lie on the Cytoplasmic side of the membrane. The helical transmembrane segment at 168-189 (RTKAIMKIAIVWAISIGVSVPI) threads the bilayer. At 190 to 213 (PVIGLRDEEKVFVNNTTCVLNDPN) the chain is on the extracellular side. N204 is a glycosylation site (N-linked (GlcNAc...) asparagine). L209 provides a ligand contact to ergotamine. Residues 214 to 236 (FVLIGSFVAFFIPLTIMVITYCL) traverse the membrane as a helical segment. Residues 237–311 (TIYVLRRQAL…AINNERKASK (75 aa)) lie on the Cytoplasmic side of the membrane. A disordered region spans residues 274-301 (EENSANPNQDQNARRRKKKERRPRGTMQ). The span at 287–297 (RRRKKKERRPR) shows a compositional bias: basic residues. Residues 312–336 (VLGIVFFVFLIMWCPFFITNILSVL) form a helical membrane-spanning segment. C337 and C341 are joined by a disulfide. Topologically, residues 337–347 (CEKSCNQKLME) are extracellular. Residues 348–370 (KLLNVFVWIGYVCSGINPLVYTL) traverse the membrane as a helical segment. An NPxxY motif; important for ligand-induced conformation changes and signaling motif is present at residues 364 to 368 (NPLVY). The Cytoplasmic portion of the chain corresponds to 371–458 (FNKIYRRAFS…SVVSERISSV (88 aa)). A PDZ-binding motif is present at residues 456–458 (SSV).

The protein belongs to the G-protein coupled receptor 1 family. As to quaternary structure, interacts with MPDZ. Interacts with ARRB2. Interacts with MPP3; this interaction stabilizes the receptor at the plasma membrane and prevents the desensitization of the HTR2C receptor-mediated calcium response. Post-translationally, N-glycosylated. In terms of tissue distribution, detected in brain.

The protein localises to the cell membrane. Its activity is regulated as follows. Inhibited by inverse agonist ritanserin. G-protein coupled receptor for 5-hydroxytryptamine (serotonin). Also functions as a receptor for various drugs and psychoactive substances, including ergot alkaloid derivatives, 1-2,5,-dimethoxy-4-iodophenyl-2-aminopropane (DOI) and lysergic acid diethylamide (LSD). Ligand binding causes a conformation change that triggers signaling via guanine nucleotide-binding proteins (G proteins) and modulates the activity of downstream effectors. HTR2C is coupled to G(q)/G(11) G alpha proteins and activates phospholipase C-beta, releasing diacylglycerol (DAG) and inositol 1,4,5-trisphosphate (IP3) second messengers that modulate the activity of phosphatidylinositol 3-kinase and promote the release of Ca(2+) ions from intracellular stores, respectively. Beta-arrestin family members inhibit signaling via G proteins and mediate activation of alternative signaling pathways. Regulates neuronal activity via the activation of short transient receptor potential calcium channels in the brain, and thereby modulates the activation of pro-opiomelanocortin neurons and the release of CRH that then regulates the release of corticosterone. Plays a role in the regulation of appetite and eating behavior, responses to anxiogenic stimuli and stress. Plays a role in insulin sensitivity and glucose homeostasis. This Homo sapiens (Human) protein is 5-hydroxytryptamine receptor 2C.